A 155-amino-acid polypeptide reads, in one-letter code: Putative methyl-CpG-binding domain protein 12 (155 aa).

Residues 1–53 form a CW-type zinc finger; the sequence is MVQCTDCKKWRLIPSMQHYNIIKETQLQTPFVCGTTSGWTPNMSCNVPQDGTT. An MBD-associated domain (MAD) motif is present at residues 3-45; sequence QCTDCKKWRLIPSMQHYNIIKETQLQTPFVCGTTSGWTPNMSC. Residues cysteine 4, cysteine 7, cysteine 33, and cysteine 45 each contribute to the Zn(2+) site. An MBD domain is found at 53–126; sequence TCDTWPSIPP…SQFSFQIPKP (74 aa). Residues 130–155 form a disordered region; sequence NYVKKRTRPVKRRKSSKDNNCEKGKK. Residues 133 to 144 show a composition bias toward basic residues; it reads KKRTRPVKRRKS. A Nuclear localization signal motif is present at residues 140-147; it reads KRRKSSKD. A compositionally biased stretch (basic and acidic residues) spans 145–155; sequence SKDNNCEKGKK.

It is found in the nucleus. Functionally, probable transcriptional regulator. The polypeptide is Putative methyl-CpG-binding domain protein 12 (MBD12) (Arabidopsis thaliana (Mouse-ear cress)).